The sequence spans 592 residues: MGEQLGGLKRTHMCGELGVKDVGKSVVVMGWVNSRRDHGGLVFIDLRDRTGIVQIVFSEQVSKEVFEKVQSVRSEYVLAVEGEVVKRLPENVNPKIPTGEIEIYAKNLKILSKSETPPFPIEDRSNVSEAVRLKYRYLDLRRPSMQRNLITRFKLTQAVREFLNDNGFIEIETPMLIKSTPEGARDYLVPSRIYPGKFYALPQSPQIFKQLLMIAGFDRYYQIARCLRDEDLRADRQPEFTQIDIEMSFVEVEDVLDINERMIKHVFKKVLDVDLDIPFRRLTYQEAMERFGTDKPDLRFGMELKDLSDILRESEFNVFKNALKNGGSIRGINVKGAASMTRKQLDELVEFAKNFGAKGLLWMQVLEGEVKSPATKFLTEGELNKILERLEAEVGDLLLIVADKDEVVFDTLGHLRVEMAKRFNLIDESKYEFVWVVDFPLLEYDEEEKRYVAKHHPFTSPKDEDIDLLEKEPLKVRAKAYDIVLNGTEIGGGSIRIHDTELQKRMFKVLGFSEEEAWKKFGFLMEAFKYGAPPHGGIAYGLDRLAMIMTGSDTIRDVIAFPKTQNAVCLMSDAPSEVSEKQLKELHIKIDL.

Residue Glu-182 coordinates L-aspartate. Residues 206 to 209 form an aspartate region; sequence QIFK. Residue Arg-228 coordinates L-aspartate. Residues 228–230 and Gln-237 each bind ATP; that span reads RDE. His-455 contributes to the L-aspartate binding site. Glu-489 provides a ligand contact to ATP. Arg-496 lines the L-aspartate pocket. An ATP-binding site is contributed by 541–544; that stretch reads GLDR.

It belongs to the class-II aminoacyl-tRNA synthetase family. Type 1 subfamily. As to quaternary structure, homodimer.

It localises to the cytoplasm. It carries out the reaction tRNA(Asx) + L-aspartate + ATP = L-aspartyl-tRNA(Asx) + AMP + diphosphate. Aspartyl-tRNA synthetase with relaxed tRNA specificity since it is able to aspartylate not only its cognate tRNA(Asp) but also tRNA(Asn). Reaction proceeds in two steps: L-aspartate is first activated by ATP to form Asp-AMP and then transferred to the acceptor end of tRNA(Asp/Asn). The polypeptide is Aspartate--tRNA(Asp/Asn) ligase (Caldanaerobacter subterraneus subsp. tengcongensis (strain DSM 15242 / JCM 11007 / NBRC 100824 / MB4) (Thermoanaerobacter tengcongensis)).